The sequence spans 1093 residues: Leukemia inhibitory factor receptor (1093 aa).

The N-terminal stretch at 1 to 43 (MGAFSWWRQPSWMADNKRGRMTPSLPWLLSALTLLHLMMHVNG) is a signal peptide. At 44 to 829 (LKRGVQQDLK…SMFVVTKENS (786 aa)) the chain is on the extracellular side. The Fibronectin type-III 1 domain maps to 45–127 (KRGVQQDLKC…QSKFTLNEKD (83 aa)). Intrachain disulfides connect C54/C64 and C81/C89. N-linked (GlcNAc...) asparagine glycans are attached at residues N165, N200, N239, and N262. 2 disulfide bridges follow: C209–C266 and C337–C347. 5 consecutive Fibronectin type-III domains span residues 331 to 428 (VPQK…ERVA), 431 to 530 (VPIS…TEAT), 534 to 625 (GPDT…IPND), 623 to 715 (PNDD…IGYI), and 720 to 829 (PIVA…KENS). 6 N-linked (GlcNAc...) asparagine glycosylation sites follow: N386, N403, N422, N441, N454, and N477. C462 and C507 are joined by a disulfide. A WSXWS motif motif is present at residues 515–519 (WSKWS). 6 N-linked (GlcNAc...) asparagine glycosylation sites follow: N568, N648, N659, N676, N725, and N783. The chain crosses the membrane as a helical span at residues 830 to 850 (VGLIIAILIPVAVAVIVGVVT). Over 851 to 1093 (SILCYRKREW…TNFFQNKPND (243 aa)) the chain is Cytoplasmic. Positions 865–873 (FYPDIPNPE) match the Box 1 motif motif. 2 disordered regions span residues 908–941 (ESRS…ENQA) and 1003–1093 (LPIN…KPND). Phosphoserine occurs at positions 923 and 1040. Polar residues-rich tracts occupy residues 1028–1063 (ANVN…NSRQ) and 1082–1093 (SFTNFFQNKPND).

It belongs to the type I cytokine receptor family. Type 2 subfamily. As to quaternary structure, heterodimer composed of LIFR and IL6ST. The heterodimer formed by LIFR and IL6ST interacts with the complex formed by CNTF and CNTFR.

It is found in the cell membrane. Its function is as follows. Signal-transducing molecule. May have a common pathway with IL6ST. The soluble form inhibits the biological activity of LIF by blocking its binding to receptors on target cells. This is Leukemia inhibitory factor receptor (Lifr) from Rattus norvegicus (Rat).